A 434-amino-acid polypeptide reads, in one-letter code: Protein POLLENLESS 3 (434 aa).

The disordered stretch occupies residues Val-13–Arg-47. Residues Arg-34–Pro-37 carry the Nuclear localization signal 1 motif. TPR repeat units lie at residues Asp-95–Asp-131, Ile-133–Gly-164, Ala-191–Lys-224, and Pro-241–Met-274. Positions Lys-142–Gly-166 form a coiled coil. A disordered region spans residues Thr-309 to Ala-329. Polar residues predominate over residues Ala-310–Pro-326. The short motif at Lys-377–Lys-380 is the Nuclear localization signal 2 element. Basic and acidic residues predominate over residues Val-393 to Trp-408. The disordered stretch occupies residues Val-393–Met-434. A coiled-coil region spans residues Trp-408 to Met-434. Residues Ile-411–Glu-423 show a composition bias toward acidic residues. The span at Arg-424–Met-434 shows a compositional bias: basic and acidic residues.

The protein belongs to the MS5 protein family. In terms of tissue distribution, expressed at low levels mostly in floral organs during meiosis. Also barely detectable in leaves, stems and roots.

It is found in the nucleus. Its function is as follows. Essential for male fertility, especially for microspore and pollen grain production. Involved in the regulation of cell division after male meiosis I and II to facilitate exit from meiosis and transition to G1. In Arabidopsis thaliana (Mouse-ear cress), this protein is Protein POLLENLESS 3.